The chain runs to 139 residues: Histone H2AX (139 aa).

2 disordered regions span residues 1 to 21 and 119 to 139; these read MSGRGKAVSKTRAKAKTRSSR and KKSSGGVSTSGKKSSQQSQEY. At Ser2 the chain carries N-acetylserine. At Ser2 the chain carries Phosphoserine. Positions 7–19 are enriched in basic residues; sequence AVSKTRAKAKTRS. At Lys10 the chain carries N6-lactoyllysine; alternate. Residues Lys14, Lys16, and Lys120 each participate in a glycyl lysine isopeptide (Lys-Gly) (interchain with G-Cter in ubiquitin) cross-link. Position 136 is a phosphoserine (Ser136). The [ST]-Q motif motif lies at 136 to 137; it reads SQ. Tyr139 carries the phosphotyrosine; by WSTF modification.

Belongs to the histone H2A family. As to quaternary structure, the nucleosome is a histone octamer containing two molecules each of H2A, H2B, H3 and H4 assembled in one H3-H4 heterotetramer and two H2A-H2B heterodimers. The octamer wraps approximately 147 bp of DNA. Interacts with numerous proteins required for DNA damage signaling and repair when phosphorylated on Ser-136. Post-translationally, phosphorylated. Phosphorylation of Ser-136 (H2AX139ph) occurs in response to DNA double strand breaks (DSBs) generated by exogenous genotoxic agents, by stalled replication forks and by meiotic recombination events. Phosphorylation is dependent on the DNA damage checkpoint kinases ATR and ATM, spreads on either side of a detected DSB site and may mark the surrounding chromatin for recruitment of proteins required for DNA damage signaling and repair. Widespread phosphorylation may also serve to amplify the damage signal or aid repair of persistent lesions. Dephosphorylation of Ser-136 is required for DNA DSB repair. Phosphorylation at Tyr-139 (H2AXY142ph) by baz1b/wstf determines the relative recruitment of either DNA repair or pro-apoptotic factors. Phosphorylation at Tyr-139 (H2AXY142ph) favors the recruitment of pro-apoptosis factors. In contrast, dephosphorylation of Tyr-139 by EYA proteins (eya1, eya2, eya3 or eya4) favors the recruitment of MDC1-containing DNA repair complexes to the tail of phosphorylated Ser-136 (H2AX139ph). Phosphorylated by VRK1. Monoubiquitination of Lys-120 (H2AXK119ub) by ring1 and rnf2/ring2 complex gives a specific tag for epigenetic transcriptional repression. Following DNA double-strand breaks (DSBs), it is ubiquitinated through 'Lys-63' linkage of ubiquitin moieties by the E2 ligase ube2n and the E3 ligases rnf8 and rnf168, leading to the recruitment of repair proteins to sites of DNA damage. Ubiquitination at Lys-14 and Lys-16 (H2AK13Ub and H2AK15Ub, respectively) in response to DNA damage is initiated by rnf168 that mediates monoubiquitination at these 2 sites, and 'Lys-63'-linked ubiquitin are then conjugated to monoubiquitin; rnf8 is able to extend 'Lys-63'-linked ubiquitin chains in vitro. H2AK119Ub and ionizing radiation-induced 'Lys-63'-linked ubiquitination (H2AK13Ub and H2AK15Ub) are distinct events.

It localises to the nucleus. The protein localises to the chromosome. Functionally, variant histone H2A which replaces conventional H2A in a subset of nucleosomes. Nucleosomes wrap and compact DNA into chromatin, limiting DNA accessibility to the cellular machineries which require DNA as a template. Histones thereby play a central role in transcription regulation, DNA repair, DNA replication and chromosomal stability. DNA accessibility is regulated via a complex set of post-translational modifications of histones, also called histone code, and nucleosome remodeling. Required for checkpoint-mediated arrest of cell cycle progression in response to low doses of ionizing radiation and for efficient repair of DNA double strand breaks (DSBs) specifically when modified by C-terminal phosphorylation. This Xenopus laevis (African clawed frog) protein is Histone H2AX (h2ax).